A 199-amino-acid chain; its full sequence is Recombination protein RecR (199 aa).

The segment at 58 to 73 adopts a C4-type zinc-finger fold; sequence CSVCYGLADSDPCHIC. A Toprim domain is found at 81–176; sequence DVVCVVEQGT…KITRIASGVP (96 aa).

Belongs to the RecR family.

Functionally, may play a role in DNA repair. It seems to be involved in an RecBC-independent recombinational process of DNA repair. It may act with RecF and RecO. This Desulfatibacillum aliphaticivorans protein is Recombination protein RecR.